Consider the following 235-residue polypeptide: uncharacterized protein (235 aa).

The protein to E.coli YbeR.

This is an uncharacterized protein from Escherichia coli (strain K12).